The primary structure comprises 160 residues: M-phase phosphoprotein 6 (160 aa).

Glycyl lysine isopeptide (Lys-Gly) (interchain with G-Cter in SUMO2) cross-links involve residues Lys-37 and Lys-86. A Phosphoserine modification is found at Ser-110. Positions 116-133 (RRYETLVGTIGKKFARKR) match the Nuclear localization signal motif. Lys-127 is covalently cross-linked (Glycyl lysine isopeptide (Lys-Gly) (interchain with G-Cter in SUMO2)). At Thr-147 the chain carries Phosphothreonine. Glycyl lysine isopeptide (Lys-Gly) (interchain with G-Cter in SUMO2) cross-links involve residues Lys-150 and Lys-153.

It belongs to the MPP6 family. As to quaternary structure, associates with the RNA exosome complex, mediated by EXOSC3. Interacts with ARHGAP18. Interacts with exosome cofactors EXOSC10 and MTREX. Phosphorylated in M (mitotic) phase.

It is found in the nucleus. It localises to the nucleolus. Its subcellular location is the cytoplasm. RNA-binding protein that associates with the RNA exosome complex. Involved in the 3'-processing of the 7S pre-RNA to the mature 5.8S rRNA and play a role in recruiting the RNA exosome complex to pre-rRNA; this function may include C1D. In Homo sapiens (Human), this protein is M-phase phosphoprotein 6.